A 155-amino-acid polypeptide reads, in one-letter code: Large ribosomal subunit protein uL22c (155 aa).

Belongs to the universal ribosomal protein uL22 family. In terms of assembly, part of the 50S ribosomal subunit.

It localises to the plastid. Its subcellular location is the chloroplast. In terms of biological role, this protein binds specifically to 23S rRNA. Its function is as follows. The globular domain of the protein is located near the polypeptide exit tunnel on the outside of the subunit, while an extended beta-hairpin is found that lines the wall of the exit tunnel in the center of the 70S ribosome. This chain is Large ribosomal subunit protein uL22c (rpl22), found in Solanum tuberosum (Potato).